The following is a 397-amino-acid chain: MNVLVINCGSSSLKYQLINSDSEEVLAKGLCERIGIDGRLVYQKEGLDKEITEAPMPTHKEAIQMVLDALVNPKTGAVKSLAEIDAVGHRVVHGGEKFSDSVVITEEVIAQVEECNDLAPLHNPANIIGIRACQALMPNVPMVGVFDTAFHQTMPEKAYLYGLPYEYYEKYKVRRYGFHGTSHSFVSKEAASYLGMDLNNSKIIVAHLGNGASVSAVLNGKCVDTSMGLTPLEGLVMGTRSGDIDPSIMEFIAKKENLDIDGVMNVLNKKSGVAGMSGVSSDFRDLEAAYNEGNERAIAAVEVFSYRVAKYIGAYAAAMNGVDAIAFTAGIGENTSFVREKIMAYLGYLGIKIDRVTNDKTRGVEALISTADSSVKVCVIPTNEELAICRETVKLVG.

Residue N7 participates in Mg(2+) binding. K14 serves as a coordination point for ATP. R90 contacts substrate. D147 functions as the Proton donor/acceptor in the catalytic mechanism. ATP-binding positions include 207–211 (HLGNG), 282–284 (DFR), and 330–334 (GIGEN). E384 is a Mg(2+) binding site.

The protein belongs to the acetokinase family. In terms of assembly, homodimer. Requires Mg(2+) as cofactor. Mn(2+) serves as cofactor.

It is found in the cytoplasm. The catalysed reaction is acetate + ATP = acetyl phosphate + ADP. Its pathway is metabolic intermediate biosynthesis; acetyl-CoA biosynthesis; acetyl-CoA from acetate: step 1/2. Catalyzes the formation of acetyl phosphate from acetate and ATP. Can also catalyze the reverse reaction. This Agathobacter rectalis (strain ATCC 33656 / DSM 3377 / JCM 17463 / KCTC 5835 / VPI 0990) (Eubacterium rectale) protein is Acetate kinase.